The following is a 142-amino-acid chain: Large ribosomal subunit protein uL13 (142 aa).

It belongs to the universal ribosomal protein uL13 family. As to quaternary structure, part of the 50S ribosomal subunit.

This protein is one of the early assembly proteins of the 50S ribosomal subunit, although it is not seen to bind rRNA by itself. It is important during the early stages of 50S assembly. In Hamiltonella defensa subsp. Acyrthosiphon pisum (strain 5AT), this protein is Large ribosomal subunit protein uL13.